Consider the following 169-residue polypeptide: Putative tRNA (cytidine(34)-2'-O)-methyltransferase (169 aa).

S-adenosyl-L-methionine-binding residues include isoleucine 79, glycine 104, isoleucine 125, and serine 133.

The protein belongs to the class IV-like SAM-binding methyltransferase superfamily. RNA methyltransferase TrmH family. TrmL subfamily.

It is found in the cytoplasm. The catalysed reaction is cytidine(34) in tRNA + S-adenosyl-L-methionine = 2'-O-methylcytidine(34) in tRNA + S-adenosyl-L-homocysteine + H(+). It carries out the reaction 5-carboxymethylaminomethyluridine(34) in tRNA(Leu) + S-adenosyl-L-methionine = 5-carboxymethylaminomethyl-2'-O-methyluridine(34) in tRNA(Leu) + S-adenosyl-L-homocysteine + H(+). Its function is as follows. Could methylate the ribose at the nucleotide 34 wobble position in tRNA. The polypeptide is Putative tRNA (cytidine(34)-2'-O)-methyltransferase (Listeria innocua serovar 6a (strain ATCC BAA-680 / CLIP 11262)).